The sequence spans 27 residues: Ferric reductase B (27 aa).

As to quaternary structure, homodimer. Requires FAD as cofactor.

The catalysed reaction is 2 a Fe(II)-siderophore + NAD(+) + H(+) = 2 a Fe(III)-siderophore + NADH. Reductase activity that acts on Fe(3+)-chelates and uses both NADH and NADPH as electron donors. May play a role in iron uptake. The protein is Ferric reductase B (ferB) of Paracoccus denitrificans.